The sequence spans 80 residues: Conotoxin Bu3 (80 aa).

An N-terminal signal peptide occupies residues 1-22 (MKLMCVLIVSVLVLTACQLSTA). A propeptide spanning residues 23–51 (DDTRDKQKDRLVRLFRKKRDSSDSGLLPR) is cleaved from the precursor. Intrachain disulfides connect cysteine 53–cysteine 69, cysteine 60–cysteine 72, and cysteine 68–cysteine 79.

It belongs to the conotoxin O1 superfamily. In terms of tissue distribution, expressed by the venom duct.

Its subcellular location is the secreted. The chain is Conotoxin Bu3 from Conus bullatus (Bubble cone).